The primary structure comprises 451 residues: 23S rRNA (uracil(1939)-C(5))-methyltransferase RlmD (451 aa).

The segment at 1–21 is disordered; it reads MAKHERGLRFQPTGGVKSVQI. The TRAM domain occupies 20-78; sequence QIPAGKKQRLSIERLSDDGRGIAFLEGKTWFVAGSLAGEEVEARVLNARGKVVEARTER. Positions 91, 97, 100, and 179 each coordinate [4Fe-4S] cluster. Positions 283, 312, 317, 333, 360, and 381 each coordinate S-adenosyl-L-methionine. Residue Cys407 is the Nucleophile of the active site.

This sequence belongs to the class I-like SAM-binding methyltransferase superfamily. RNA M5U methyltransferase family. RlmD subfamily.

It catalyses the reaction uridine(1939) in 23S rRNA + S-adenosyl-L-methionine = 5-methyluridine(1939) in 23S rRNA + S-adenosyl-L-homocysteine + H(+). Functionally, catalyzes the formation of 5-methyl-uridine at position 1939 (m5U1939) in 23S rRNA. In Pseudomonas syringae pv. tomato (strain ATCC BAA-871 / DC3000), this protein is 23S rRNA (uracil(1939)-C(5))-methyltransferase RlmD.